Here is a 148-residue protein sequence, read N- to C-terminus: Large ribosomal subunit protein uL15 (148 aa).

Over residues 1–30 (MPSRLRKTRKLRGHVSHGHGRIGKHRKHPG) the composition is skewed to basic residues. A disordered region spans residues 1–39 (MPSRLRKTRKLRGHVSHGHGRIGKHRKHPGGRGNAGGLH). The residue at position 39 (His-39) is a (3S)-3-hydroxyhistidine. An N6-acetyllysine mark is found at Lys-47 and Lys-55. Phosphoserine is present on Ser-68. The residue at position 110 (Lys-110) is an N6-acetyllysine.

Belongs to the universal ribosomal protein uL15 family. In terms of assembly, component of the large ribosomal subunit. In terms of processing, hydroxylated on His-39 by MINA.

Its subcellular location is the cytoplasm. Functionally, component of the large ribosomal subunit. The ribosome is a large ribonucleoprotein complex responsible for the synthesis of proteins in the cell. This is Large ribosomal subunit protein uL15 (RPL27A) from Macaca fascicularis (Crab-eating macaque).